The primary structure comprises 664 residues: ATP-dependent RNA helicase MSS116, mitochondrial (664 aa).

Residues 1–26 (MLTSILIKGRTPVLASRNLLAALSNC) constitute a mitochondrion transit peptide. A disordered region spans residues 42-79 (NRDQRNFGRNQRNNNSNRYRNSRFNSRPRTRSREDDDE). Positions 48–68 (FGRNQRNNNSNRYRNSRFNSR) are enriched in low complexity. The Q motif motif lies at 106-134 (SLLEEGVLDKEIHKAITRMEFPGLTPVQQ). In terms of domain architecture, Helicase ATP-binding spans 139–326 (PILSSEDHDV…NNIMNKKECL (188 aa)). Residue 152–159 (AKTGTGKT) coordinates ATP. The short motif at 267–270 (DEAD) is the DEAD box element. The 158-residue stretch at 355–512 (SIFAAVEHIK…EKYEPSEEIK (158 aa)) folds into the Helicase C-terminal domain. The tract at residues 602 to 664 (GNNKSYDYDD…NYSSRNSNIY (63 aa)) is disordered. A compositionally biased stretch (basic and acidic residues) spans 628 to 638 (QNRDYDDEPFR). Over residues 639 to 649 (RSNNNRRSFSR) the composition is skewed to low complexity. Residues 653 to 664 (KNNYSSRNSNIY) show a composition bias toward polar residues.

It belongs to the DEAD box helicase family. DDX18/HAS1 subfamily.

Its subcellular location is the mitochondrion matrix. It carries out the reaction ATP + H2O = ADP + phosphate + H(+). ATP-dependent RNA helicase required for mitochondrial splicing of group I and II introns. Specifically involved in the ATP-dependent splicing of the bl1 intron of COB. Also required for efficient mitochondrial translation. The sequence is that of ATP-dependent RNA helicase MSS116, mitochondrial (MSS116) from Saccharomyces cerevisiae (strain ATCC 204508 / S288c) (Baker's yeast).